Here is a 1207-residue protein sequence, read N- to C-terminus: DNA-directed RNA polymerase subunit beta' (1207 aa).

4 residues coordinate Zn(2+): Cys60, Cys62, Cys75, and Cys78. The Mg(2+) site is built by Asp450, Asp452, and Asp454. Positions 819, 893, 900, and 903 each coordinate Zn(2+).

It belongs to the RNA polymerase beta' chain family. As to quaternary structure, the RNAP catalytic core consists of 2 alpha, 1 beta, 1 beta' and 1 omega subunit. When a sigma factor is associated with the core the holoenzyme is formed, which can initiate transcription. Mg(2+) is required as a cofactor. Zn(2+) serves as cofactor.

The catalysed reaction is RNA(n) + a ribonucleoside 5'-triphosphate = RNA(n+1) + diphosphate. Its function is as follows. DNA-dependent RNA polymerase catalyzes the transcription of DNA into RNA using the four ribonucleoside triphosphates as substrates. This is DNA-directed RNA polymerase subunit beta' from Streptococcus pyogenes serotype M3 (strain ATCC BAA-595 / MGAS315).